A 506-amino-acid polypeptide reads, in one-letter code: Abscisic acid 8'-hydroxylase 2 (506 aa).

A helical membrane pass occupies residues 3 to 23 (FLLFFVFVTAAVLCFVVPAFL). Heme is bound at residue cysteine 437.

It belongs to the cytochrome P450 family. Requires heme as cofactor. In terms of tissue distribution, in internodes and expanding leaves. Weak expression in seedlings.

The protein localises to the membrane. It catalyses the reaction 2-cis-(+)-abscisate + reduced [NADPH--hemoprotein reductase] + O2 = (+)-8'-hydroxyabscisate + oxidized [NADPH--hemoprotein reductase] + H2O + H(+). The protein operates within plant hormone degradation; abscisic acid degradation. Involved in the oxidative degradation of abscisic acid. The protein is Abscisic acid 8'-hydroxylase 2 (CYP707A6) of Oryza sativa subsp. indica (Rice).